The primary structure comprises 103 residues: MNLTPREREKLLVSLAAMVARNRLSRGVRLNHPEAIALITDFVVEGARDGRSVADLMQAGAHVITAGQCMSGVPEMIEAVQVEATFPDGTKLVTVHHPIRHEA.

This sequence belongs to the urease gamma subunit family. As to quaternary structure, heterotrimer of UreA (gamma), UreB (beta) and UreC (alpha) subunits. Three heterotrimers associate to form the active enzyme.

The protein resides in the cytoplasm. The enzyme catalyses urea + 2 H2O + H(+) = hydrogencarbonate + 2 NH4(+). It participates in nitrogen metabolism; urea degradation; CO(2) and NH(3) from urea (urease route): step 1/1. The sequence is that of Urease subunit gamma from Paracoccus denitrificans (strain Pd 1222).